Here is a 372-residue protein sequence, read N- to C-terminus: Geranylgeranyl pyrophosphate synthase 4 (372 aa).

A signal peptide spans 1-22 (MEAQNIFLYLLIVFLSLHFVFT). Lys121, Arg124, and His153 together coordinate isopentenyl diphosphate. Mg(2+) is bound by residues Asp160 and Asp166. Arg171 provides a ligand contact to dimethylallyl diphosphate. Position 172 (Arg172) interacts with isopentenyl diphosphate. Dimethylallyl diphosphate contacts are provided by Lys257, Thr258, Gln295, Lys312, and Lys322.

This sequence belongs to the FPP/GGPP synthase family. As to quaternary structure, monomer. Requires Mg(2+) as cofactor. Faintly expressed in flowers. Expressed in roots and siliques.

It is found in the endoplasmic reticulum. The enzyme catalyses isopentenyl diphosphate + dimethylallyl diphosphate = (2E)-geranyl diphosphate + diphosphate. It catalyses the reaction isopentenyl diphosphate + (2E)-geranyl diphosphate = (2E,6E)-farnesyl diphosphate + diphosphate. The catalysed reaction is isopentenyl diphosphate + (2E,6E)-farnesyl diphosphate = (2E,6E,10E)-geranylgeranyl diphosphate + diphosphate. It participates in isoprenoid biosynthesis; farnesyl diphosphate biosynthesis; farnesyl diphosphate from geranyl diphosphate and isopentenyl diphosphate: step 1/1. The protein operates within isoprenoid biosynthesis; geranyl diphosphate biosynthesis; geranyl diphosphate from dimethylallyl diphosphate and isopentenyl diphosphate: step 1/1. It functions in the pathway isoprenoid biosynthesis; geranylgeranyl diphosphate biosynthesis; geranylgeranyl diphosphate from farnesyl diphosphate and isopentenyl diphosphate: step 1/1. Functionally, catalyzes the trans-addition of the three molecules of isopentenyl diphosphate (IPP) onto dimethylallyl diphosphate (DMAPP) to form geranylgeranyl diphosphate. In Arabidopsis thaliana (Mouse-ear cress), this protein is Geranylgeranyl pyrophosphate synthase 4.